A 593-amino-acid polypeptide reads, in one-letter code: 3-hydroxy-3-methylglutaryl-coenzyme A reductase (593 aa).

Residues 1 to 36 (MDVRRRSINSIHQIPSVGGTAPPMLKPKQPTKVDAV) are disordered. Transmembrane regions (helical) follow at residues 52–72 (LYITNGVFFTLFFTVVYYLLV) and 94–114 (AIFTFVASFIYLLGFFGIGLV). Residues 115–177 (QPFTSRSSHD…PVPISPPSSE (63 aa)) form a linker region. Residues 178–593 (EDEEIIKSVV…SNKDVTKASS (416 aa)) are catalytic. E272 acts as the Charge relay system in catalysis. N336 carries an N-linked (GlcNAc...) asparagine glycan. The Charge relay system role is filled by K404. The N-linked (GlcNAc...) asparagine glycan is linked to N449. D480 (charge relay system) is an active-site residue. The active-site Proton donor is the H578. N-linked (GlcNAc...) asparagine glycosylation is present at N582.

Belongs to the HMG-CoA reductase family.

The protein localises to the endoplasmic reticulum membrane. It carries out the reaction (R)-mevalonate + 2 NADP(+) + CoA = (3S)-3-hydroxy-3-methylglutaryl-CoA + 2 NADPH + 2 H(+). The protein operates within metabolic intermediate biosynthesis; (R)-mevalonate biosynthesis; (R)-mevalonate from acetyl-CoA: step 3/3. In terms of biological role, catalyzes the synthesis of mevalonate. The specific precursor of all isoprenoid compounds present in plants. This is 3-hydroxy-3-methylglutaryl-coenzyme A reductase from Camptotheca acuminata (Happy tree).